Here is a 209-residue protein sequence, read N- to C-terminus: Uracil phosphoribosyltransferase (209 aa).

5-phospho-alpha-D-ribose 1-diphosphate-binding positions include Arg-78, Arg-103, and 130–138 (DPMLATAGS). Residues Ile-193 and 198 to 200 (GDA) each bind uracil. Asp-199 is a binding site for 5-phospho-alpha-D-ribose 1-diphosphate.

The protein belongs to the UPRTase family. Mg(2+) serves as cofactor.

The enzyme catalyses UMP + diphosphate = 5-phospho-alpha-D-ribose 1-diphosphate + uracil. Its pathway is pyrimidine metabolism; UMP biosynthesis via salvage pathway; UMP from uracil: step 1/1. With respect to regulation, allosterically activated by GTP. Functionally, catalyzes the conversion of uracil and 5-phospho-alpha-D-ribose 1-diphosphate (PRPP) to UMP and diphosphate. This is Uracil phosphoribosyltransferase from Methylibium petroleiphilum (strain ATCC BAA-1232 / LMG 22953 / PM1).